A 345-amino-acid chain; its full sequence is Neuropeptide receptor 15 (345 aa).

At 1–11 (MSVAVGIPYVC) the chain is on the extracellular side. A helical transmembrane segment spans residues 12 to 32 (FFIILSVVGIIGNVIVIYAIA). At 33–40 (GDRNMRKS) the chain is on the cytoplasmic side. A helical transmembrane segment spans residues 41–61 (VMNILLLNLAVADLANLIFTI). At 62–90 (PEWIPPVFFGSTDWLFPSFLCPVCRYLEC) the chain is on the extracellular side. Cys82 and Cys171 form a disulfide bridge. A helical membrane pass occupies residues 91 to 111 (VFLFASISTQMIVCIERYIAI). The Cytoplasmic portion of the chain corresponds to 112-125 (VLPMQARQLCSRRN). A helical transmembrane segment spans residues 126–146 (VLITVLVDWIFVACFASPYAV). The Extracellular segment spans residues 147–187 (WHSVKTKDRNTNSLRFKLFQLSATCSNTVGKSTWWQGYKLT). Residues 188–208 (EFLAFYFVPCFIITVVYTKVA) form a helical membrane-spanning segment. The Cytoplasmic segment spans residues 209 to 246 (KCLWCKDPTLQCETRSCLDNKSSSRSSDALRTRRNVVK). The chain crosses the membrane as a helical span at residues 247 to 267 (MLIACVAVYFVCYSPIQVIFL). The Extracellular portion of the chain corresponds to 268–281 (SKAVLNVTIHPPYD). Residues 282–304 (FILLMNALAMTCSASNPLLYTLF) form a helical membrane-spanning segment. Over 305–345 (SQKFRRRLRDVLYCPSDVENETKTYYSINNTSIVGPRASFN) the chain is Cytoplasmic.

It belongs to the G-protein coupled receptor 1 family. Expressed in pharyngeal muscle and AWC, ASG, ASE, ASI, and ASJ sensory neurons. Expressed in ASI neuron. Expressed in AFD neurons and in AVK interneuron.

It localises to the cell membrane. In terms of biological role, probable receptor for neuropeptide ligand nlp-8 that plays a role in octopamine signaling and specifically, the octopamine inhibition of aversion responses in olfactory sensory neurons. Plays a crucial role in daf-7 expression. Acts in concert with gpa-4 to activate TGF-beta-like daf-7 secretion in the ASI neuron, thereby promoting larval development and inhibition of dauer diapause. Suppresses immune response against pathogenic infection by inhibiting transcription regulators elt-2 and hlh-30 in ASJ neuron. Promotes pathogen avoidance behavior via intestinal gon-2, independent of aerotaxis. The polypeptide is Neuropeptide receptor 15 (npr-15) (Caenorhabditis elegans).